The following is a 247-amino-acid chain: MSSSIEIFPDSDILVAAAGKRLVGAIGAAVAARGQALIVLTGGGNGIALLRYLSAQAQQIEWSKVHLFWGDERYVPEDDDERNLKQARRALLNHVDIPSNQVHPMAASDGDFGGDLDAAALAYEQVLAASAAPGDPAPNFDVHLLGMGPEGHINSLFPHSPAVLESTRMVVAVDDSPKPPPRRITLTLPAIQRSREVWLLVSGPGKADAVAAAIGGADPVSVPAAGAVGRQNTLWLLDRDAAAKLPS.

Belongs to the glucosamine/galactosamine-6-phosphate isomerase family. 6-phosphogluconolactonase subfamily.

It carries out the reaction 6-phospho-D-glucono-1,5-lactone + H2O = 6-phospho-D-gluconate + H(+). It participates in carbohydrate degradation; pentose phosphate pathway; D-ribulose 5-phosphate from D-glucose 6-phosphate (oxidative stage): step 2/3. In terms of biological role, hydrolysis of 6-phosphogluconolactone to 6-phosphogluconate. The protein is 6-phosphogluconolactonase (pgl) of Mycobacterium bovis (strain ATCC BAA-935 / AF2122/97).